The following is a 629-amino-acid chain: (-)-alpha pinene synthase 1, chloroplastic (629 aa).

The transit peptide at 1–48 (MSPVSVISLPSDLCLPTSFIDRSGRELNPLHITIPNVAMRRQGKLMTR) directs the protein to the chloroplast. 3 residues coordinate Mg(2+): Asp-380, Asp-384, and Asp-532. The DDXXD motif motif lies at 380 to 384 (DDMYD).

This sequence belongs to the terpene synthase family. Tpsd subfamily. Mg(2+) serves as cofactor. It depends on Mn(2+) as a cofactor.

It is found in the plastid. The protein resides in the chloroplast. It catalyses the reaction (2E)-geranyl diphosphate = (1S,5S)-alpha-pinene + diphosphate. It carries out the reaction (2E)-geranyl diphosphate = (1S,5S)-beta-pinene + diphosphate. It functions in the pathway terpene metabolism; oleoresin biosynthesis. It participates in secondary metabolite biosynthesis; terpenoid biosynthesis. Monoterpene synthase (TPS) involved in the biosynthesis of monoterpene natural products included in conifer oleoresin secretions and volatile emissions; these compounds contribute to biotic and abiotic stress defense against herbivores and pathogens. Catalyzes the conversion of (2E)-geranyl diphosphate (GPP) to (-)-alpha-pinene and, to a lower extent, to (-)-beta-pinene. The protein is (-)-alpha pinene synthase 1, chloroplastic of Pinus contorta (Shore pine).